The following is a 347-amino-acid chain: D-alanine--D-alanine ligase (347 aa).

One can recognise an ATP-grasp domain in the interval Lys131 to Asp333. Glu161–Glu216 serves as a coordination point for ATP. 3 residues coordinate Mg(2+): Asp287, Glu300, and Asn302.

Belongs to the D-alanine--D-alanine ligase family. Mg(2+) serves as cofactor. The cofactor is Mn(2+).

It is found in the cytoplasm. It catalyses the reaction 2 D-alanine + ATP = D-alanyl-D-alanine + ADP + phosphate + H(+). It functions in the pathway cell wall biogenesis; peptidoglycan biosynthesis. In terms of biological role, cell wall formation. The sequence is that of D-alanine--D-alanine ligase from Streptococcus pneumoniae serotype 19F (strain G54).